A 150-amino-acid polypeptide reads, in one-letter code: PTS system galactitol-specific EIIA component (150 aa).

In terms of domain architecture, PTS EIIA type-2 spans 1-144 (MTNLFVRSGI…TQLKEYFTKY (144 aa)). His62 serves as the catalytic Tele-phosphohistidine intermediate. His62 carries the phosphohistidine; by HPr modification.

In terms of assembly, forms a complex with one each of subunit of GatA, GatB and 2 subunits of GatC.

The protein resides in the cytoplasm. Its function is as follows. The phosphoenolpyruvate-dependent sugar phosphotransferase system (sugar PTS), a major carbohydrate active transport system, catalyzes the phosphorylation of incoming sugar substrates concomitantly with their translocation across the cell membrane. The enzyme II complex composed of GatA, GatB and GatC is involved in galactitol transport. The polypeptide is PTS system galactitol-specific EIIA component (gatA) (Escherichia coli O157:H7).